The chain runs to 427 residues: Protein phosphatase methylesterase 1 (427 aa).

The segment at 1-49 (MSELQKSFAKAKLAKLPPEAPPFSMHPPRDEDDSESASSTGTVVPSPSR) is disordered. Positions 36–49 (SASSTGTVVPSPSR) are enriched in polar residues. Catalysis depends on residues S207, D233, and H364. Residues 402–427 (SAAMKQGAEAGAVPPFGRGQGSSHKP) are disordered.

The protein belongs to the AB hydrolase superfamily.

It catalyses the reaction [phosphatase 2A protein]-C-terminal L-leucine methyl ester + H2O = [phosphatase 2A protein]-C-terminal L-leucine + methanol + H(+). Functionally, demethylates proteins that have been reversibly carboxymethylated. Demethylates the phosphatase PP2A catalytic subunit. This chain is Protein phosphatase methylesterase 1 (ppe1), found in Aspergillus oryzae (strain ATCC 42149 / RIB 40) (Yellow koji mold).